The primary structure comprises 188 residues: dCTP deaminase (188 aa).

DCTP contacts are provided by residues 111 to 116 (KSTYAR), 135 to 137 (TLE), glutamine 156, tyrosine 170, lysine 179, and glutamine 180. Glutamate 137 functions as the Proton donor/acceptor in the catalytic mechanism.

Belongs to the dCTP deaminase family. Homotrimer.

It catalyses the reaction dCTP + H2O + H(+) = dUTP + NH4(+). Its pathway is pyrimidine metabolism; dUMP biosynthesis; dUMP from dCTP (dUTP route): step 1/2. Catalyzes the deamination of dCTP to dUTP. This chain is dCTP deaminase, found in Rickettsia akari (strain Hartford).